A 225-amino-acid chain; its full sequence is MPIEQRGDASVVTHALARDELTRIRNVETEQVAFRKGLVRLGRICGYEIIDGRMETEYTEVQTPLTTTMGERVKGLEDVVIVNVLRAATPFVEGLLKAFPRARQGVISASRDEEAGMNDDGEFPISVEYVKLPEITEDDTVIIADPMLATGSTMATVLDYITSEKTEPENLLVLAAVSAPEGIVRVSEAQPDADIISVAIDDELDEDGFIVPGLGDAGDRAFRTT.

36–40 (KGLVR) contributes to the GTP binding site. 5-phospho-alpha-D-ribose 1-diphosphate is bound by residues Arg-86, Arg-111, and 145–153 (DPMLATGST). Residues Ile-210 and 215–217 (GDA) contribute to the uracil site. Asp-216 lines the 5-phospho-alpha-D-ribose 1-diphosphate pocket.

It belongs to the UPRTase family. Mg(2+) serves as cofactor.

The enzyme catalyses UMP + diphosphate = 5-phospho-alpha-D-ribose 1-diphosphate + uracil. Its pathway is pyrimidine metabolism; UMP biosynthesis via salvage pathway; UMP from uracil: step 1/1. Its activity is regulated as follows. Allosterically activated by GTP. In terms of biological role, catalyzes the conversion of uracil and 5-phospho-alpha-D-ribose 1-diphosphate (PRPP) to UMP and diphosphate. The chain is Uracil phosphoribosyltransferase from Haloarcula marismortui (strain ATCC 43049 / DSM 3752 / JCM 8966 / VKM B-1809) (Halobacterium marismortui).